The primary structure comprises 320 residues: Nicotianamine synthase 2 (320 aa).

The protein belongs to the nicotianamine synthase (NAS)-like family.

It carries out the reaction 3 S-adenosyl-L-methionine = nicotianamine + 3 S-methyl-5'-thioadenosine + 3 H(+). Its function is as follows. Synthesizes nicotianamine, a polyamine which serves as a sensor for the physiological iron status within the plant, and/or might be involved in the transport of iron. In Arabidopsis thaliana (Mouse-ear cress), this protein is Nicotianamine synthase 2 (NAS2).